The chain runs to 229 residues: DNA mismatch repair protein MutH (229 aa).

The protein belongs to the MutH family.

It localises to the cytoplasm. In terms of biological role, sequence-specific endonuclease that cleaves unmethylated GATC sequences. It is involved in DNA mismatch repair. This Shigella boydii serotype 18 (strain CDC 3083-94 / BS512) protein is DNA mismatch repair protein MutH.